Here is a 687-residue protein sequence, read N- to C-terminus: uncharacterized protein (687 aa).

14 helical membrane passes run 28 to 48 (IIFT…TIVV), 66 to 86 (WAVT…GKLG), 94 to 114 (VLLG…LSQT), 126 to 146 (GVGA…VVPL), 154 to 174 (GVLG…GGWL), 182 to 202 (WAFW…ATAV), 211 to 231 (PVID…LIMA), 243 to 263 (SATI…FVWL), 287 to 307 (VLSF…PIYL), 320 to 340 (LRTL…GVLV), 348 to 368 (IFPV…SQMD), 378 to 398 (LYLV…VLIV), 414 to 434 (VTFF…ALFV), and 480 to 500 (LTQV…LALL).

The protein belongs to the major facilitator superfamily. TCR/Tet family.

It localises to the cell membrane. This is an uncharacterized protein from Mycobacterium tuberculosis (strain CDC 1551 / Oshkosh).